The chain runs to 288 residues: Ankyrin repeat and SOCS box protein 8 (288 aa).

A Phosphoserine modification is found at serine 17. ANK repeat units follow at residues 52–81 (GTLK…EVNA), 85–113 (YNRT…NPNA), 117–146 (NRDT…SVNA), and 150–179 (NNDT…EVRV). The region spanning 235–288 (QLCEKLTVLCSAPGTLKTLSRYAVRRSLGLQYLPDAVKGLPLPASLKEYLLLIE) is the SOCS box domain.

This sequence belongs to the ankyrin SOCS box (ASB) family. As to quaternary structure, interacts with TBK1; this interaction promotes TBK1 proteasomal degradation. Phosphorylated by TBK1.

It localises to the cytoplasm. Its pathway is protein modification; protein ubiquitination. In terms of biological role, may be a substrate-recognition component of a SCF-like ECS (Elongin-Cullin-SOCS-box protein) E3 ubiquitin-protein ligase complex which mediates the ubiquitination and subsequent proteasomal degradation of target proteins. Inhibits IFN-beta production through the IRF3 signaling pathway by targeting TBK1 via 'Lys-48'-linked ubiquitination, leading to its proteasomal degradation. The sequence is that of Ankyrin repeat and SOCS box protein 8 (ASB8) from Bos taurus (Bovine).